Here is a 357-residue protein sequence, read N- to C-terminus: Arginine kinase Pro c 2.0101 (357 aa).

In terms of domain architecture, Phosphagen kinase N-terminal spans 9–91; that stretch reads KLEEGFKKLE…FDPIIEDYHK (83 aa). 64–68 lines the L-arginine pocket; sequence GVGIY. The Phosphagen kinase C-terminal domain occupies 119–356; the sequence is FVISTRVRCG…LELIKIEKEM (238 aa). ATP-binding positions include 122 to 126 and His-185; that span reads STRVR. Glu-225 lines the L-arginine pocket. An ATP-binding site is contributed by Arg-229. Cys-271 is an L-arginine binding site. ATP contacts are provided by residues 280-284 and 309-314; these read RASVH and RGTRGE. Position 314 (Glu-314) interacts with L-arginine.

The protein belongs to the ATP:guanido phosphotransferase family. In terms of processing, glycosylated. In terms of tissue distribution, muscle (at protein level).

The catalysed reaction is L-arginine + ATP = N(omega)-phospho-L-arginine + ADP + H(+). Functionally, catalyzes the reversible transfer of high energy ATP gamma-phosphate group to L-arginine. The polypeptide is Arginine kinase Pro c 2.0101 (Procambarus clarkii (Red swamp crayfish)).